Consider the following 233-residue polypeptide: Pyridoxal phosphate homeostasis protein (233 aa).

Position 35 is an N6-(pyridoxal phosphate)lysine (lysine 35).

Belongs to the pyridoxal phosphate-binding protein YggS/PROSC family.

Its function is as follows. Pyridoxal 5'-phosphate (PLP)-binding protein, which is involved in PLP homeostasis. The chain is Pyridoxal phosphate homeostasis protein from Pasteurella multocida (strain Pm70).